A 620-amino-acid polypeptide reads, in one-letter code: Translocator protein BipB (620 aa).

The tract at residues 58 to 95 (QCDAQPAAHDARLDDKPALRAPQERDAPPLGASDTGSR) is disordered. The segment covering 66–84 (HDARLDDKPALRAPQERDA) has biased composition (basic and acidic residues). A coiled-coil region spans residues 309-339 (EMQAKREAELQKKSDEYQAQVKKAEEMQKTM). 3 consecutive transmembrane segments (helical) span residues 355 to 375 (FAAAAFTGGASLALAAVGLAL), 401 to 421 (AILKPLMEMISSLITKALVAC), and 430 to 450 (LAGAILGAVVTGVALVAAAFV).

This sequence belongs to the SctE/SipB/YopB family.

The protein resides in the secreted. The protein localises to the host membrane. In terms of biological role, plays a role in the bacterium-induced formation of multinucleated giant cell (MNGC), which is formed after host cell fusion, as well as in the intercellular spreading of bacteria and in the induction of apoptosis in macrophages. May act in concert with other effector proteins to induce fusion of host cell membranes. This is Translocator protein BipB (bipB) from Burkholderia pseudomallei (strain 1710b).